Consider the following 283-residue polypeptide: Gap junction alpha-6 protein (283 aa).

The Cytoplasmic portion of the chain corresponds to 1–23 (MSDWSALHQLLEKVQPYSTAGGK). The helical transmembrane segment at 24 to 41 (VWIKVLFIFRILLLGTAI) threads the bilayer. At 42 to 76 (ESAWSDEQFEFHCNTQQPGCENVCYDHAFPISHVR) the chain is on the extracellular side. Residues 77–99 (LWVLQVIFVSVPILLYLAHVYYV) traverse the membrane as a helical segment. The Cytoplasmic segment spans residues 100–150 (VRQNKKLNKQEEELEAAHFNEASVERHLETIAGEQFKCGSEEQSKVKMRGR). Residues 151–173 (LLLTYMASIFFKSVFEMAFLLIQ) form a helical membrane-spanning segment. Topologically, residues 174–208 (WYIYGFTLSALYICEQSPCPRRVDCFLSRPTEKTI) are extracellular. The helical transmembrane segment at 209-231 (FILFMFVVSVVSFVLDIIELFYV) threads the bilayer. Topologically, residues 232–283 (LFKAIKNRMRKAEDEVYCDELPCPSHVSSSTVLTTIDSSEQAVPVELSSVCI) are cytoplasmic.

This sequence belongs to the connexin family. Alpha-type (group II) subfamily. A connexon is composed of a hexamer of connexins.

It is found in the cell membrane. It localises to the cell junction. The protein resides in the gap junction. In terms of biological role, one gap junction consists of a cluster of closely packed pairs of transmembrane channels, the connexons, through which materials of low MW diffuse from one cell to a neighboring cell. In Mus musculus (Mouse), this protein is Gap junction alpha-6 protein (Gja6).